The sequence spans 91 residues: MVTLVIALYFIGMLMLFINRHFLMMILLSIESMYMSLLLMLCIYFCFFNLLSIFVFLISIVCEAGLALSLLVMMSFFYGNELMMSMNLIKC.

3 consecutive transmembrane segments (helical) span residues Leu8–Leu28, Leu38–Ile58, and Ser59–Gly79.

It belongs to the complex I subunit 4L family.

The protein resides in the mitochondrion membrane. The enzyme catalyses a ubiquinone + NADH + 5 H(+)(in) = a ubiquinol + NAD(+) + 4 H(+)(out). Its function is as follows. Core subunit of the mitochondrial membrane respiratory chain NADH dehydrogenase (Complex I) that is believed to belong to the minimal assembly required for catalysis. Complex I functions in the transfer of electrons from NADH to the respiratory chain. The immediate electron acceptor for the enzyme is believed to be ubiquinone. This Rhipicephalus sanguineus (Brown dog tick) protein is NADH-ubiquinone oxidoreductase chain 4L (ND4L).